Consider the following 288-residue polypeptide: Polyisoprenoid diphosphate/phosphate phosphohydrolase PLPP6 (288 aa).

Positions 1-82 (MPSPKARSGS…STGGGGQQLP (82 aa)) are disordered. The Cytoplasmic portion of the chain corresponds to 1-127 (MPSPKARSGS…EDSSWGSVRP (127 aa)). Residues 128–148 (LMKLIEVSGHGIPWLAGAAYC) traverse the membrane as a helical segment. The Lumenal segment spans residues 149-161 (LYKSDSPAGQEVM). A helical transmembrane segment spans residues 162-182 (LNLLMALVLDVVLVGVLKAVV). Positions 179–187 (KAVVRRRRP) are phosphatase sequence motif I. Residues 183–223 (RRRRPAHNRMDMFATFSVDSYSFPSGHATRAAMCARFLLNH) lie on the Cytoplasmic side of the membrane. Residues 206-209 (PSGH) are phosphatase sequence motif II. The active-site Proton donors is the histidine 209. A helical transmembrane segment spans residues 224 to 244 (LVLAAPLRVLVLLWATIVGFS). The interval 244 to 255 (SRVLLGRHNVTD) is phosphatase sequence motif III. Topologically, residues 245-255 (RVLLGRHNVTD) are lumenal. Histidine 251 serves as the catalytic Nucleophile. A helical membrane pass occupies residues 256 to 276 (VAFGFFMGYWQYNLVEMLWLS). The Cytoplasmic portion of the chain corresponds to 277 to 288 (PVMLQSAIGQLH).

It belongs to the PA-phosphatase related phosphoesterase family.

It localises to the endoplasmic reticulum membrane. The protein resides in the nucleus envelope. It is found in the nucleus inner membrane. It catalyses the reaction presqualene diphosphate + H2O = presqualene phosphate + phosphate + H(+). The enzyme catalyses presqualene phosphate + H2O = presqualene alcohol + phosphate. The catalysed reaction is (2E,6E)-farnesyl diphosphate + H2O = (2E,6E)-farnesyl phosphate + phosphate + H(+). It carries out the reaction (2E,6E)-farnesyl phosphate + H2O = (2E,6E)-farnesol + phosphate. It catalyses the reaction (2E,6E,10E)-geranylgeranyl diphosphate + H2O = (2E,6E,10E)-geranylgeranyl phosphate + phosphate + H(+). The enzyme catalyses (2E,6E,10E)-geranylgeranyl phosphate + H2O = (2E,6E,10E)-geranylgeraniol + phosphate. The catalysed reaction is (2E)-geranyl diphosphate + H2O = (2E)-geranyl phosphate + phosphate + H(+). It carries out the reaction (2E)-geranyl phosphate + H2O = (2E)-geraniol + phosphate. It catalyses the reaction 1,2-dihexadecanoyl-sn-glycero-3-phosphate + H2O = 1,2-dihexadecanoyl-sn-glycerol + phosphate. Magnesium-independent polyisoprenoid diphosphatase that catalyzes the sequential dephosphorylation of presqualene, farnesyl, geranyl and geranylgeranyl diphosphates. May regulate the biosynthesis of cholesterol and related sterols by dephosphorylating presqualene and farnesyl diphosphate, two key intermediates in this biosynthetic pathway. May also play a role in protein prenylation by acting on farnesyl diphosphate and its derivative geranylgeranyl diphosphate, two precursors for the addition of isoprenoid anchors to membrane proteins. Has a lower activity towards phosphatidic acid (PA), but through phosphatidic acid dephosphorylation may participate in the biosynthesis of phospholipids and triacylglycerols. May also act on ceramide-1-P, lysophosphatidic acid (LPA) and sphing-4-enine 1-phosphate/sphingosine-1-phosphate. This Danio rerio (Zebrafish) protein is Polyisoprenoid diphosphate/phosphate phosphohydrolase PLPP6 (plpp6).